The following is a 636-amino-acid chain: Putative lipase ATG15 (636 aa).

Topologically, residues 1–19 are cytoplasmic; that stretch reads MYKYGTVVDPAMTTNRRSR. A helical; Signal-anchor for type II membrane protein membrane pass occupies residues 20–42; that stretch reads LSGFRCASTARVTATLLLSFLAF. At 43–636 the chain is on the lumenal side; it reads SPSSASSDFG…DDLEFATDEM (594 aa). N-linked (GlcNAc...) asparagine glycosylation is found at Asn-211, Asn-233, Asn-291, Asn-315, and Asn-477. A disordered region spans residues 478 to 500; sequence GTETTTTSSPSTTSTTRTRTRTS. Positions 479 to 500 are enriched in low complexity; it reads TETTTTSSPSTTSTTRTRTRTS.

It belongs to the AB hydrolase superfamily. Lipase family. Binds to both phosphatidylinositol (PI) and phosphatidylinositol 3,5-bisphosphate (PIP2).

The protein resides in the endosome. It is found in the multivesicular body membrane. It localises to the prevacuolar compartment membrane. The catalysed reaction is a triacylglycerol + H2O = a diacylglycerol + a fatty acid + H(+). In terms of biological role, lipase which is essential for lysis of subvacuolar cytoplasm to vacuole targeted bodies and intravacuolar autophagic bodies. Involved in the lysis of intravacuolar multivesicular body (MVB) vesicles. The intravacuolar membrane disintegration by ATG15 is critical to life span extension. Autophagy is required for proper vegetative growth, asexual/sexual reproduction, and full virulence. Autophagy is particularly involved in the biosynthesis of deoxynivalenol (DON), an important virulence determinant. This Gibberella zeae (strain ATCC MYA-4620 / CBS 123657 / FGSC 9075 / NRRL 31084 / PH-1) (Wheat head blight fungus) protein is Putative lipase ATG15.